The sequence spans 120 residues: Ribonuclease P protein component 2 (120 aa).

Belongs to the eukaryotic/archaeal RNase P protein component 2 family. Consists of a catalytic RNA component and at least 4-5 protein subunits.

The protein localises to the cytoplasm. The catalysed reaction is Endonucleolytic cleavage of RNA, removing 5'-extranucleotides from tRNA precursor.. Part of ribonuclease P, a protein complex that generates mature tRNA molecules by cleaving their 5'-ends. The polypeptide is Ribonuclease P protein component 2 (Methanobrevibacter smithii (strain ATCC 35061 / DSM 861 / OCM 144 / PS)).